The following is a 382-amino-acid chain: MGGFCGADRGGFLALLVWLQLLQPLFSGTYKPREDSGVMHRPQRPRRPRSDPEAPAQQSRLKSLSISHPSGVPVSVDRTEIPGSGSPSGTTTKITLENRRSSLGGPFFTDTCGHRITEVDPGSLSAGRKWPWQVSLQSQNEHVCGGSLISHRWVLTAAHCIYEQEEYMVMLGDDMLHSESESVTLVPVQDIIFPSNFDIQTMRNDIALALLYFPVNYSSLIQPVCLPEEPFRVKNGTVCWVTGWGQQNEIDAGFASILLQEVQQRILLQKHCNTLFQRQLGTSKNLVIKGMICGLQDSGQSLCWGDSGNPLVCESDNTWTQVGIMSWGINCNGVPVLSVYTDIAEYNEWVSYVLSQASRMDPMGVLVLYLSLVFPLALLVAL.

A signal peptide spans 1 to 27; it reads MGGFCGADRGGFLALLVWLQLLQPLFS. A disordered region spans residues 30–97; that stretch reads YKPREDSGVM…SGTTTKITLE (68 aa). 2 stretches are compositionally biased toward polar residues: residues 56–68 and 85–95; these read AQQS…SISH and GSPSGTTTKIT. Positions 119–355 constitute a Peptidase S1 domain; that stretch reads VDPGSLSAGR…YNEWVSYVLS (237 aa). Cys144 and Cys160 are oxidised to a cystine. Catalysis depends on charge relay system residues His159 and Asp205. Disulfide bonds link Cys239–Cys313, Cys272–Cys293, and Cys303–Cys331. The active-site Charge relay system is Ser307. Residues 362-382 form a helical membrane-spanning segment; that stretch reads PMGVLVLYLSLVFPLALLVAL.

The protein belongs to the peptidase S1 family. In terms of tissue distribution, testis-specific. Expressed in germ cells at the stages from late pachytene spermatocytes to spermatids.

The protein localises to the cell membrane. In terms of biological role, plays a role in spermatogenesis. Involved in germ cell survival during meiosis. Lacks protease activity in vitro. This Mus musculus (Mouse) protein is Serine protease 43.